The chain runs to 55 residues: Large ribosomal subunit protein bL33 (55 aa).

Belongs to the bacterial ribosomal protein bL33 family.

The polypeptide is Large ribosomal subunit protein bL33 (Paenarthrobacter aurescens (strain TC1)).